The sequence spans 180 residues: MARLKEKYLQEIRKALQAKFGYKNIMEIPKLEKIVINMGVSEATQNPKAIDNAVQDLMTITGQKPVVTKAKKSIAAFKLRQGTSIGCKVTLRGDRMYEFLDRLINVALPRVRDFHGVSPNSFDGRGNYTLGIREQLIFPEIEYDKIDKVRGMDIVMVTTAKSDEEARELLRGFGMPFREH.

Belongs to the universal ribosomal protein uL5 family. As to quaternary structure, part of the 50S ribosomal subunit; part of the 5S rRNA/L5/L18/L25 subcomplex. Contacts the 5S rRNA and the P site tRNA. Forms a bridge to the 30S subunit in the 70S ribosome.

Its function is as follows. This is one of the proteins that bind and probably mediate the attachment of the 5S RNA into the large ribosomal subunit, where it forms part of the central protuberance. In the 70S ribosome it contacts protein S13 of the 30S subunit (bridge B1b), connecting the 2 subunits; this bridge is implicated in subunit movement. Contacts the P site tRNA; the 5S rRNA and some of its associated proteins might help stabilize positioning of ribosome-bound tRNAs. The protein is Large ribosomal subunit protein uL5 of Moorella thermoacetica (strain ATCC 39073 / JCM 9320).